The primary structure comprises 156 residues: Small ribosomal subunit protein uS7 (156 aa).

This sequence belongs to the universal ribosomal protein uS7 family. In terms of assembly, part of the 30S ribosomal subunit. Contacts proteins S9 and S11.

In terms of biological role, one of the primary rRNA binding proteins, it binds directly to 16S rRNA where it nucleates assembly of the head domain of the 30S subunit. Is located at the subunit interface close to the decoding center, probably blocks exit of the E-site tRNA. The protein is Small ribosomal subunit protein uS7 of Mycobacterium avium (strain 104).